The sequence spans 93 residues: Stromal cell-derived factor 1 (93 aa).

Positions 1–21 (MDIRTLALFSILLGSLCLSEG) are cleaved as a signal peptide. The Receptor activation motif motif lies at 22–23 (KP). A receptor and heparin binding region spans residues 29 to 33 (RCPCR). Disulfide bonds link Cys30-Cys55 and Cys32-Cys71. Heparin contacts are provided by residues 41–51 (KSNIKHLKILS), Arg62, Gln69, and Lys85. 2 receptor binding regions span residues 48-50 (KIL) and 60-64 (VARLK).

Belongs to the intercrine alpha (chemokine CxC) family. In terms of assembly, monomer or homodimer; in equilibrium. Dimer formation is induced by non acidic pH and the presence of multivalent anions, and by binding to cxcr4 or heparin.

Its subcellular location is the secreted. Its function is as follows. Chemoattractant. Activates the C-X-C chemokine receptor cxcr4 to induce a rapid and transient rise in the level of intracellular calcium ions, and chemotaxis. Signaling with cxcr4 mediates the directional movement of mesodermal cells during gastrulation. Binds to the allosteric site (site 2) of integrins and activates them in a cxcr4-independent manner. This is Stromal cell-derived factor 1 from Xenopus tropicalis (Western clawed frog).